The chain runs to 413 residues: Amino acid transporter AVT3B (413 aa).

The Cytoplasmic portion of the chain corresponds to 1-27 (MGLEEQGRAREDTPLLGKGRPLSSKFK). A helical transmembrane segment spans residues 28–48 (TFANVFIAIVGAGVLGLPYAF). The Vacuolar portion of the chain corresponds to 49–54 (KRTGWL). A helical transmembrane segment spans residues 55 to 75 (MGLLTLFSVAALINHCMMLLV). Topologically, residues 76-103 (HIRRKLGVSNIGSFGDLGFAACGNLGRF) are cytoplasmic. The helical transmembrane segment at 104–124 (VVDILIILSQAGFCVGYLIFI) threads the bilayer. The Vacuolar segment spans residues 125–145 (GNTLANLSKPTKSTTLMSLRH). The helical transmembrane segment at 146–166 (LMGVSPKSLYIWGCFPFQLGL) threads the bilayer. The Cytoplasmic segment spans residues 167–174 (NSIKTLTH). A helical membrane pass occupies residues 175 to 195 (LAPLSIFADVVDLGAMAVVIV). Over 196–207 (EDIKITVVQRPQ) the chain is Vacuolar. The chain crosses the membrane as a helical span at residues 208–228 (VVAFGGMSVFFYGMGVAVYAF). Topologically, residues 229-249 (EGVGMVLPLESETKDKDKFGK) are cytoplasmic. The helical transmembrane segment at 250–270 (VLALSMLFIAVMYGSFGVLGY) threads the bilayer. Over 271–288 (MAFGDDTMDIITANLGAG) the chain is Vacuolar. A helical transmembrane segment spans residues 289–309 (VVSSLVQLGLCINLFFTFPLM). The Cytoplasmic segment spans residues 310 to 331 (MNPVFEIVERRFWSGMYCVWLR). The helical transmembrane segment at 332–352 (WLLVLAVTLVALLVPNFADFL) threads the bilayer. The Vacuolar segment spans residues 353 to 355 (SLV). Residues 356–376 (GSSVCCALGFVLPSLFHLMVF) form a helical membrane-spanning segment. Over 377–390 (KDEMEWKQRALDVG) the chain is Cytoplasmic. The chain crosses the membrane as a helical span at residues 391 to 411 (ILLLGVILGVSGTWSSLTEIF). Over 412-413 (QE) the chain is Vacuolar.

It belongs to the amino acid/polyamine transporter 2 family. Amino acid/auxin permease (AAAP) (TC 2.A.18.8) subfamily. In terms of tissue distribution, ubiquitous.

It is found in the vacuole membrane. Translocates preferentially neutral amino acids from the vacuole to the cytoplasm. This is Amino acid transporter AVT3B from Arabidopsis thaliana (Mouse-ear cress).